The sequence spans 68 residues: Large ribosomal subunit protein bL35 (68 aa).

This sequence belongs to the bacterial ribosomal protein bL35 family.

This chain is Large ribosomal subunit protein bL35, found in Rickettsia bellii (strain RML369-C).